We begin with the raw amino-acid sequence, 193 residues long: Probable GTP-binding protein EngB (193 aa).

The EngB-type G domain maps to 19 to 188; the sequence is SVKEVCFMGR…HKQIFELFKA (170 aa). GTP contacts are provided by residues 27–34, 53–57, 70–73, 136–139, and 167–169; these read GRSNVGKS, GRTQL, DLPG, NKFD, and VSA. Residues Ser34 and Thr55 each contribute to the Mg(2+) site.

Belongs to the TRAFAC class TrmE-Era-EngA-EngB-Septin-like GTPase superfamily. EngB GTPase family. Requires Mg(2+) as cofactor.

Its function is as follows. Necessary for normal cell division and for the maintenance of normal septation. The protein is Probable GTP-binding protein EngB of Mycoplasma pneumoniae (strain ATCC 29342 / M129 / Subtype 1) (Mycoplasmoides pneumoniae).